Consider the following 2779-residue polypeptide: Protein lava lamp (2779 aa).

Disordered stretches follow at residues Leu31 to Lys62, Ala79 to Ser98, and Lys110 to Leu135. The segment covering Gly33 to Gly51 has biased composition (polar residues). 2 positions are modified to phosphoserine: Ser34 and Ser35. Residues Thr52 to Asp85 adopt a coiled-coil conformation. Residues Ala79–Ser91 are compositionally biased toward basic and acidic residues. Residues Ser95, Ser98, Ser122, and Ser133 each carry the phosphoserine modification. The stretch at Glu141–Ile175 forms a coiled coil. 3 positions are modified to phosphoserine: Ser186, Ser352, and Ser354. 2 coiled-coil regions span residues Glu220–Ile607 and Gly659–Ile716. A compositionally biased stretch (basic and acidic residues) spans Glu337–Ser352. Disordered regions lie at residues Glu337 to Val366, Arg622 to Leu662, Arg711 to Ser730, and Gln1716 to Ala1753. Low complexity-rich tracts occupy residues Ser717–Ser730 and Gln1716–Gln1740. 3 coiled-coil regions span residues Leu751 to His1733, Thr1785 to Gln1863, and Asn1941 to Asn2433. 4 disordered regions span residues Glu2348 to Val2367, Glu2484 to Ser2507, Asn2552 to Glu2578, and Thr2633 to Asn2665. Residues Gln2488–Gln2502 are compositionally biased toward low complexity. The stretch at Glu2504–Gln2544 forms a coiled coil. The stretch at Asp2600–Glu2641 forms a coiled coil. Low complexity predominate over residues Ser2643–Asn2665.

Interacts with CLIP-190 and spectrin separately.

The protein localises to the golgi apparatus. It is found in the cytoplasmic vesicle. Its subcellular location is the autophagosome. Its function is as follows. Lva and spectrin may form a Golgi-based scaffold that mediates interaction of Golgi bodies with microtubules and facilitates Golgi-derived membrane secretion required for the formation of furrows during cellularization. Under starvation conditions recruited by ema to developing autophagsosomes where it may function in autophagosome growth. This is Protein lava lamp (lva) from Drosophila melanogaster (Fruit fly).